Reading from the N-terminus, the 126-residue chain is Aspartate 1-decarboxylase (126 aa).

Catalysis depends on Ser-25, which acts as the Schiff-base intermediate with substrate; via pyruvic acid. Ser-25 is modified (pyruvic acid (Ser)). Substrate is bound at residue Thr-57. The Proton donor role is filled by Tyr-58. 73–75 (GAA) lines the substrate pocket.

The protein belongs to the PanD family. In terms of assembly, heterooctamer of four alpha and four beta subunits. It depends on pyruvate as a cofactor. Post-translationally, is synthesized initially as an inactive proenzyme, which is activated by self-cleavage at a specific serine bond to produce a beta-subunit with a hydroxyl group at its C-terminus and an alpha-subunit with a pyruvoyl group at its N-terminus.

It localises to the cytoplasm. It carries out the reaction L-aspartate + H(+) = beta-alanine + CO2. Its pathway is cofactor biosynthesis; (R)-pantothenate biosynthesis; beta-alanine from L-aspartate: step 1/1. In terms of biological role, catalyzes the pyruvoyl-dependent decarboxylation of aspartate to produce beta-alanine. The polypeptide is Aspartate 1-decarboxylase (Pseudomonas aeruginosa (strain LESB58)).